The primary structure comprises 906 residues: Protein translocase subunit SecA (906 aa).

ATP is bound by residues Gln89, 107–111 (GEGKT), and Asp502. Residues Cys890, Cys892, Cys901, and His902 each coordinate Zn(2+).

The protein belongs to the SecA family. In terms of assembly, monomer and homodimer. Part of the essential Sec protein translocation apparatus which comprises SecA, SecYEG and auxiliary proteins SecDF-YajC and YidC. It depends on Zn(2+) as a cofactor.

Its subcellular location is the cell inner membrane. It is found in the cytoplasm. The catalysed reaction is ATP + H2O + cellular proteinSide 1 = ADP + phosphate + cellular proteinSide 2.. In terms of biological role, part of the Sec protein translocase complex. Interacts with the SecYEG preprotein conducting channel. Has a central role in coupling the hydrolysis of ATP to the transfer of proteins into and across the cell membrane, serving both as a receptor for the preprotein-SecB complex and as an ATP-driven molecular motor driving the stepwise translocation of polypeptide chains across the membrane. The chain is Protein translocase subunit SecA from Brucella suis biovar 1 (strain 1330).